The sequence spans 1108 residues: Folliculin-interacting protein 2 (1108 aa).

Residues 38 to 456 (FGLSDIRLLV…TVMPVDHPPI (419 aa)) form the uDENN FNIP1/2-type domain. Disordered stretches follow at residues 89–112 (QESS…GGSL), 209–233 (RTGS…DRDS), 598–635 (SEGV…AEPD), and 649–671 (QNDQ…PRVR). A compositionally biased stretch (low complexity) spans 91-106 (SSSSSGSSSSGSSSSH). Phosphoserine occurs at positions 212 and 217. Residues 464 to 1034 (TSQSVNMLAK…VSSLLQSILQ (571 aa)) enclose the cDENN FNIP1/2-type domain. The interval 540-905 (DDQVINGSKI…DEACVLALLE (366 aa)) is interaction with PRKAA1. Positions 606 to 620 (LGHKPEKNRCKRPEQ) are enriched in basic and acidic residues. A compositionally biased stretch (polar residues) spans 652-663 (QEATQDCSSSPP). Residues Ser720, Ser721, and Ser723 each carry the phosphoserine modification. Residues 1044–1099 (FCIMHLEDRLQEMYLKSKMLSEYLRGHTRVHVKELSVVLGIESNDLPLLTAIASTH) enclose the dDENN FNIP1/2-type domain.

The protein belongs to the FNIP family. As to quaternary structure, homodimer and homomultimer. Heterodimer and heteromultimer with FNIP1. Interacts (via C-terminus) with FLCN (via C-terminus). Phosphorylated FLCN is preferentially bound. Component of the lysosomal folliculin complex (LFC), composed of FLCN, FNIP1 (or FNIP2), RagA/RRAGA or RagB/RRAGB GDP-bound, RagC/RRAGC or RagD/RRAGD GTP-bound, and Ragulator. Interacts with PRKAA1, PRKAB1 and PRKAG1 subunits of 5'-AMP-activated protein kinase. Interacts with HSP70, HSP90AA1, STIP1, PTGES3, CDC37, BRAF, GCR and CDK4. Phosphorylated by AMPK.

The protein localises to the lysosome membrane. The protein resides in the cytoplasm. Functionally, binding partner of the GTPase-activating protein FLCN: involved in the cellular response to amino acid availability by regulating the non-canonical mTORC1 signaling cascade controlling the MiT/TFE factors TFEB and TFE3. Required to promote FLCN recruitment to lysosomes and interaction with Rag GTPases, leading to activation of the non-canonical mTORC1 signaling. In low-amino acid conditions, component of the lysosomal folliculin complex (LFC) on the membrane of lysosomes, which inhibits the GTPase-activating activity of FLCN, thereby inactivating mTORC1 and promoting nuclear translocation of TFEB and TFE3. Upon amino acid restimulation, disassembly of the LFC complex liberates the GTPase-activating activity of FLCN, leading to activation of mTORC1 and subsequent inactivation of TFEB and TFE3. Together with FLCN, regulates autophagy: following phosphorylation by ULK1, interacts with GABARAP and promotes autophagy. In addition to its role in mTORC1 signaling, also acts as a co-chaperone of HSP90AA1/Hsp90: inhibits the ATPase activity of HSP90AA1/Hsp90, leading to activate both kinase and non-kinase client proteins of HSP90AA1/Hsp90. Acts as a scaffold to load client protein FLCN onto HSP90AA1/Hsp90. Competes with the activating co-chaperone AHSA1 for binding to HSP90AA1, thereby providing a reciprocal regulatory mechanism for chaperoning of client proteins. May play a role in the signal transduction pathway of apoptosis induced by O6-methylguanine-mispaired lesions. The protein is Folliculin-interacting protein 2 of Mus musculus (Mouse).